An 890-amino-acid polypeptide reads, in one-letter code: Translation initiation factor IF-2 (890 aa).

Residues 45–302 (LIDHLNQKNS…SSLQQGFQKP (258 aa)) are disordered. The segment covering 67–81 (STLNIPSTGGKSKSV) has biased composition (polar residues). Residues 92 to 217 (VKRDPQEAER…RMAEENKWTD (126 aa)) show a composition bias toward basic and acidic residues. Over residues 252 to 266 (GRGRNAKAARPKKGN) the composition is skewed to basic residues. Basic and acidic residues predominate over residues 267-280 (KHAESKADREEARA). In terms of domain architecture, tr-type G spans 389–558 (PRAPVVTIMG…LLQAEVLELK (170 aa)). A G1 region spans residues 398 to 405 (GHVDHGKT). 398–405 (GHVDHGKT) provides a ligand contact to GTP. The segment at 423–427 (GITQH) is G2. The segment at 444–447 (DTPG) is G3. GTP is bound by residues 444 to 448 (DTPGH) and 498 to 501 (NKID). Positions 498-501 (NKID) are G4. The tract at residues 534 to 536 (SAK) is G5. Lys808 is subject to N6-acetyllysine.

This sequence belongs to the TRAFAC class translation factor GTPase superfamily. Classic translation factor GTPase family. IF-2 subfamily.

Its subcellular location is the cytoplasm. One of the essential components for the initiation of protein synthesis. Protects formylmethionyl-tRNA from spontaneous hydrolysis and promotes its binding to the 30S ribosomal subunits. Also involved in the hydrolysis of GTP during the formation of the 70S ribosomal complex. The polypeptide is Translation initiation factor IF-2 (Shigella dysenteriae serotype 1 (strain Sd197)).